The primary structure comprises 772 residues: General transcription and DNA repair factor IIH helicase subunit XPD (772 aa).

Positions 7–283 constitute a Helicase ATP-binding domain; it reads DLPILFPYPR…QSDSKKLQDE (277 aa). 42–49 contacts ATP; it reads MPSGTGKT. Positions 115, 133, 154, and 189 each coordinate [4Fe-4S] cluster. Residues 233–236 carry the DEAH box motif; the sequence is DEAH.

Belongs to the helicase family. RAD3/XPD subfamily. In terms of assembly, component of the 7-subunit TFIIH core complex composed of XPB/ptr8, XPD/rad15, ssl1, tfb1, tfb2, tfb4 and tfb5, which is active in NER. The core complex associates with the 3-subunit CTD-kinase module TFIIK composed of mcs2/cyclin H, mcs6/cdk7 and pmh1/tfb3 to form the 10-subunit holoenzyme (holo-TFIIH) active in transcription. [4Fe-4S] cluster serves as cofactor.

It localises to the nucleus. The enzyme catalyses Couples ATP hydrolysis with the unwinding of duplex DNA at the replication fork by translocating in the 5'-3' direction. This creates two antiparallel DNA single strands (ssDNA). The leading ssDNA polymer is the template for DNA polymerase III holoenzyme which synthesizes a continuous strand.. It catalyses the reaction ATP + H2O = ADP + phosphate + H(+). Its function is as follows. ATP-dependent 5'-3' DNA helicase, component of the general transcription and DNA repair factor IIH (TFIIH) core complex, which is involved in general and transcription-coupled nucleotide excision repair (NER) of damaged DNA and, when complexed to TFIIK, in RNA transcription by RNA polymerase II. In NER, TFIIH acts by opening DNA around the lesion to allow the excision of the damaged oligonucleotide and its replacement by a new DNA fragment. The ATP-dependent helicase activity of XPD/rad15 is required for DNA opening. In transcription, TFIIH has an essential role in transcription initiation. When the pre-initiation complex (PIC) has been established, TFIIH is required for promoter opening and promoter escape. Phosphorylation of the C-terminal tail (CTD) of the largest subunit of RNA polymerase II by the kinase module TFIIK controls the initiation of transcription. XPD/rad15 acts by forming a bridge between TFIIK and the core-TFIIH complex. Involved in the maintenance of the fidelity of DNA replication. The protein is General transcription and DNA repair factor IIH helicase subunit XPD of Schizosaccharomyces pombe (strain 972 / ATCC 24843) (Fission yeast).